Consider the following 413-residue polypeptide: Putative syntaxin-5 (413 aa).

Residues 1 to 391 (MSDFHNIRSR…RYLQNISKNR (391 aa)) are Cytoplasmic-facing. Residues 257-290 (KNRRDKFSSGAAVPMGLPSSSSGANVRSKLLQDD) are disordered. Positions 321–383 (LEYAQARSNT…DMAHSELVRY (63 aa)) constitute a t-SNARE coiled-coil homology domain. A helical; Anchor for type IV membrane protein membrane pass occupies residues 392 to 412 (WLMIQVFGVLMVFFVVFVLFL). A topological domain (extracellular) is located at residue threonine 413.

The protein belongs to the syntaxin family.

The protein localises to the membrane. Potentially involved in docking of synaptic vesicles at presynaptic active zones. The chain is Putative syntaxin-5 (syx-5) from Caenorhabditis elegans.